A 92-amino-acid polypeptide reads, in one-letter code: FMRFamide-like neuropeptides 16 (92 aa).

Positions 1–24 (MNFSGFEFSSIVAFFLLILQLSTA) are cleaved as a signal peptide. Residues 25–55 (AVLPADYAYGVADEMSALPDSGSLFAEQRPS) constitute a propeptide that is removed on maturation. Residues phenylalanine 64, phenylalanine 74, and phenylalanine 84 each carry the phenylalanine amide modification. Positions 87–92 (SAPFEQ) are excised as a propeptide.

This sequence belongs to the FARP (FMRFamide related peptide) family. Each flp gene is expressed in a distinct set of neurons.

It localises to the secreted. Functionally, FMRFamides and FMRFamide-like peptides are neuropeptides. AQTFVRF-amide inhibits the activity of dissected pharyngeal myogenic muscle system. In Caenorhabditis elegans, this protein is FMRFamide-like neuropeptides 16.